The chain runs to 499 residues: Argininosuccinate lyase (499 aa).

The segment at 1-22 (MSDGEDHETANADDRDETVVRR) is disordered. The span at 7–22 (HETANADDRDETVVRR) shows a compositional bias: basic and acidic residues.

The protein belongs to the lyase 1 family. Argininosuccinate lyase subfamily.

The protein resides in the cytoplasm. It catalyses the reaction 2-(N(omega)-L-arginino)succinate = fumarate + L-arginine. It participates in amino-acid biosynthesis; L-arginine biosynthesis; L-arginine from L-ornithine and carbamoyl phosphate: step 3/3. The chain is Argininosuccinate lyase from Haloarcula marismortui (strain ATCC 43049 / DSM 3752 / JCM 8966 / VKM B-1809) (Halobacterium marismortui).